The sequence spans 85 residues: Large ribosomal subunit protein bL27 (85 aa).

The protein belongs to the bacterial ribosomal protein bL27 family.

The sequence is that of Large ribosomal subunit protein bL27 from Cellvibrio japonicus (strain Ueda107) (Pseudomonas fluorescens subsp. cellulosa).